The following is a 365-amino-acid chain: Mitogen-activated protein kinase 13 (365 aa).

The Protein kinase domain maps to 25-308 (YVSPTHVGSG…AAQALTHPFF (284 aa)). 31–39 (VGSGAYGSV) contributes to the ATP binding site. S47 carries the post-translational modification Phosphoserine. Residue K54 participates in ATP binding. The Proton acceptor role is filled by D150. Position 180 is a phosphothreonine; by MAP2K3, MAP2K4, MAP2K6 and MAP2K7 (T180). Positions 180-182 (TGY) match the TXY motif. Y182 is modified (phosphotyrosine; by MAP2K3, MAP2K4, MAP2K6 and MAP2K7). S350 is modified (phosphoserine).

Belongs to the protein kinase superfamily. CMGC Ser/Thr protein kinase family. MAP kinase subfamily. In terms of assembly, interacts with MAPK8IP2. The cofactor is Mg(2+). Dually phosphorylated on Thr-180 and Tyr-182 by MAP2K3/MKK3, MAP2K4/MKK4, MAP2K6/MKK6 and MAP2K7/MKK7, which activates the enzyme. Dephosphorylated by dual specificity phosphatase DUSP1.

The catalysed reaction is L-seryl-[protein] + ATP = O-phospho-L-seryl-[protein] + ADP + H(+). The enzyme catalyses L-threonyl-[protein] + ATP = O-phospho-L-threonyl-[protein] + ADP + H(+). Activated by phosphorylation on threonine and tyrosine by dual specificity kinases, MAP2K3/MKK3, MAP2K6/MKK6, MAP2K4/MKK4 and MAP2K7/MKK7. Activation by ultraviolet radiation, hyperosmotic shock, anisomycin or by TNF-alpha is mediated by MAP2K3/MKK3. Inhibited by dual specificity phosphatase DUSP1. Serine/threonine kinase which acts as an essential component of the MAP kinase signal transduction pathway. MAPK13 is one of the four p38 MAPKs which play an important role in the cascades of cellular responses evoked by extracellular stimuli such as pro-inflammatory cytokines or physical stress leading to direct activation of transcription factors such as ELK1 and ATF2. Accordingly, p38 MAPKs phosphorylate a broad range of proteins and it has been estimated that they may have approximately 200 to 300 substrates each. MAPK13 is one of the less studied p38 MAPK isoforms. Some of the targets are downstream kinases such as MAPKAPK2, which are activated through phosphorylation and further phosphorylate additional targets. Plays a role in the regulation of protein translation by phosphorylating and inactivating EEF2K. Involved in cytoskeletal remodeling through phosphorylation of MAPT and STMN1. Mediates UV irradiation induced up-regulation of the gene expression of CXCL14. Plays an important role in the regulation of epidermal keratinocyte differentiation, apoptosis and skin tumor development. Phosphorylates the transcriptional activator MYB in response to stress which leads to rapid MYB degradation via a proteasome-dependent pathway. MAPK13 also phosphorylates and down-regulates PRKD1 during regulation of insulin secretion in pancreatic beta cells. The chain is Mitogen-activated protein kinase 13 (MAPK13) from Pan troglodytes (Chimpanzee).